The primary structure comprises 174 residues: Disulfide bond formation protein B (174 aa).

Topologically, residues 1-12 (MLNWIDTAPRRI) are cytoplasmic. Residues 13 to 29 (LALISAACVAMLAFGMY) form a helical membrane-spanning segment. At 30 to 47 (LQHVVGLEPCPMCIVQRY) the chain is on the periplasmic side. Cys-39 and Cys-42 are joined by a disulfide. Residues 48–64 (ALIGVAVFAGLASARGQ) form a helical membrane-spanning segment. The Cytoplasmic segment spans residues 65–69 (KGWWM). A helical transmembrane segment spans residues 70-87 (TWSVLALVAAGFGAFVAA). At 88–143 (RQSWLQWYPPEIATCGRDFYGMIENYPISRAIPMIFRGSGDCTAVDWTFLGGSIAN) the chain is on the periplasmic side. Cys-102 and Cys-129 are disulfide-bonded. A helical membrane pass occupies residues 144–162 (WSFVWFLLFAVLLLVLLVR). Residues 163–174 (GGRGAPDTLARA) lie on the Cytoplasmic side of the membrane.

This sequence belongs to the DsbB family.

The protein localises to the cell inner membrane. Its function is as follows. Required for disulfide bond formation in some periplasmic proteins. Acts by oxidizing the DsbA protein. This is Disulfide bond formation protein B from Acidovorax sp. (strain JS42).